The primary structure comprises 140 residues: L-fucose mutarotase (140 aa).

His22 functions as the Proton donor in the catalytic mechanism. Residues Asp30, Arg107, and 129-131 (YGN) contribute to the substrate site.

It belongs to the RbsD / FucU family. FucU mutarotase subfamily. Homodecamer.

Its subcellular location is the cytoplasm. The enzyme catalyses alpha-L-fucose = beta-L-fucose. It functions in the pathway carbohydrate metabolism; L-fucose metabolism. In terms of biological role, involved in the anomeric conversion of L-fucose. The chain is L-fucose mutarotase from Salmonella gallinarum (strain 287/91 / NCTC 13346).